The following is a 256-amino-acid chain: Alcohol dehydrogenase (256 aa).

Serine 2 carries the N-acetylserine modification. NAD(+) contacts are provided by residues 12-41 (FVAGLGGIGLDTSKELLKRDLKNLVILDRI) and aspartate 65. Residue serine 140 participates in substrate binding. Tyrosine 153 functions as the Proton acceptor in the catalytic mechanism. Lysine 157 lines the NAD(+) pocket.

Belongs to the short-chain dehydrogenases/reductases (SDR) family. As to quaternary structure, homodimer.

It carries out the reaction a primary alcohol + NAD(+) = an aldehyde + NADH + H(+). The catalysed reaction is a secondary alcohol + NAD(+) = a ketone + NADH + H(+). With respect to regulation, inhibited by 2,2,2-trifluoroethanol and pyrazole. The polypeptide is Alcohol dehydrogenase (Adh) (Drosophila melanogaster (Fruit fly)).